Consider the following 1052-residue polypeptide: Carbamoyl phosphate synthase large chain (1052 aa).

The segment at 1–399 is carboxyphosphate synthetic domain; it reads MRENVKRVLV…ALQKAVRMLD (399 aa). Arg127, Arg167, Gly173, Gly174, Lys206, Leu208, Glu213, Gly239, Val240, His241, Gln282, and Glu296 together coordinate ATP. The ATP-grasp 1 domain occupies 131–325; the sequence is RETMINVNLP…LAYVSAKLAL (195 aa). Residues Gln282, Glu296, and Asn298 each contribute to the Mg(2+) site. Mn(2+) is bound by residues Gln282, Glu296, and Asn298. Positions 400-548 are oligomerization domain; that stretch reads LGEPGIIGGK…VTYNGTEDDI (149 aa). The carbamoyl phosphate synthetic domain stretch occupies residues 549-930; that stretch reads EFSNGIRKLL…LKSWLSSSPN (382 aa). In terms of domain architecture, ATP-grasp 2 spans 674 to 864; that stretch reads SRLLDKLGIK…IIDLALTGVI (191 aa). Positions 710, 749, 751, 756, 780, 781, 782, 783, 823, and 835 each coordinate ATP. Mg(2+) is bound by residues Gln823, Glu835, and Asn837. Mn(2+) contacts are provided by Gln823, Glu835, and Asn837. The 123-residue stretch at 930–1052 folds into the MGS-like domain; it reads NRLPDQKGIA…YEIGEYGAGI (123 aa). The segment at 931–1052 is allosteric domain; sequence RLPDQKGIAL…YEIGEYGAGI (122 aa).

Belongs to the CarB family. As to quaternary structure, composed of two chains; the small (or glutamine) chain promotes the hydrolysis of glutamine to ammonia, which is used by the large (or ammonia) chain to synthesize carbamoyl phosphate. Tetramer of heterodimers (alpha,beta)4. Mg(2+) is required as a cofactor. Mn(2+) serves as cofactor.

The catalysed reaction is hydrogencarbonate + L-glutamine + 2 ATP + H2O = carbamoyl phosphate + L-glutamate + 2 ADP + phosphate + 2 H(+). It catalyses the reaction hydrogencarbonate + NH4(+) + 2 ATP = carbamoyl phosphate + 2 ADP + phosphate + 2 H(+). The protein operates within amino-acid biosynthesis; L-arginine biosynthesis; carbamoyl phosphate from bicarbonate: step 1/1. It functions in the pathway pyrimidine metabolism; UMP biosynthesis via de novo pathway; (S)-dihydroorotate from bicarbonate: step 1/3. Functionally, large subunit of the glutamine-dependent carbamoyl phosphate synthetase (CPSase). CPSase catalyzes the formation of carbamoyl phosphate from the ammonia moiety of glutamine, carbonate, and phosphate donated by ATP, constituting the first step of 2 biosynthetic pathways, one leading to arginine and/or urea and the other to pyrimidine nucleotides. The large subunit (synthetase) binds the substrates ammonia (free or transferred from glutamine from the small subunit), hydrogencarbonate and ATP and carries out an ATP-coupled ligase reaction, activating hydrogencarbonate by forming carboxy phosphate which reacts with ammonia to form carbamoyl phosphate. This chain is Carbamoyl phosphate synthase large chain, found in Sulfolobus acidocaldarius (strain ATCC 33909 / DSM 639 / JCM 8929 / NBRC 15157 / NCIMB 11770).